Consider the following 290-residue polypeptide: MQPTVIETWPAPAKLNLFLYITGQRQDGYHLLQTLFQFLDYGDTLTIQPRDDDQINLLTPVDGVENEQNLIVRAARLLQQHCKRHNIHPAQFGADIRIDKYLPMGGGLGGGSSNAATVLVALNHLWKSGLSVDTLADLGLQLGADVPVFVRGHAAFAEGIGERLTPANPPEKWYLVAHPGVSIATPLIFGDPELTRNSPVRDLETLLNQTFVNDCEAIARKRFREVEQLLSWLLEYAPARLTGTGACVFAEFDTEFAARQVLDQAPEWLNGFVARGVNVSPLQRTLSGQL.

Residue K14 is part of the active site. P103–S113 contacts ATP. The active site involves D145.

It belongs to the GHMP kinase family. IspE subfamily. In terms of assembly, homodimer.

It carries out the reaction 4-CDP-2-C-methyl-D-erythritol + ATP = 4-CDP-2-C-methyl-D-erythritol 2-phosphate + ADP + H(+). Its pathway is isoprenoid biosynthesis; isopentenyl diphosphate biosynthesis via DXP pathway; isopentenyl diphosphate from 1-deoxy-D-xylulose 5-phosphate: step 3/6. Functionally, catalyzes the phosphorylation of the position 2 hydroxy group of 4-diphosphocytidyl-2C-methyl-D-erythritol. The polypeptide is 4-diphosphocytidyl-2-C-methyl-D-erythritol kinase (Pectobacterium carotovorum subsp. carotovorum (strain PC1)).